Reading from the N-terminus, the 68-residue chain is MKPSGLTLAFLVVFMMAIMYNSVQAEALADADAEAFAEAGVKELFGKAWGLVKKHLPKACGLMGYVKQ.

A signal peptide spans 1 to 25 (MKPSGLTLAFLVVFMMAIMYNSVQA). Positions 26 to 39 (EALADADAEAFAEA) are excised as a propeptide.

Belongs to the formicidae venom precursor-01 superfamily. Homo- or heterodimer with PLP4 (AC A0A348G5W0); disulfide-linked. Truncated sequences of this peptide have also been found in the venom. It is possible they have been cleaved in the venom. Expressed by the venom gland.

It is found in the secreted. Its function is as follows. This homodimer composed of two cationic amphipathic alpha-helical peptides has antimicrobial activities against E.coli, S.aureus (MIC=3.1 uM), and S.cerevisiae (MIC=3.1 uM). It also shows histamine-releasing activity (66.4% at 10 uM) and a weak hemolytic activity (10.5% at 50 uM). The chain is U-poneritoxin(01)-Om4b from Odontomachus monticola (Trap-jaw ant).